Here is a 255-residue protein sequence, read N- to C-terminus: Small ribosomal subunit protein eS1 (255 aa).

The span at 1-18 (MAVGKNKRLSKGKKGLKK) shows a compositional bias: basic residues. Positions 1-22 (MAVGKNKRLSKGKKGLKKRAQD) are disordered. N-acetylalanine; partial is present on Ala-2.

The protein belongs to the eukaryotic ribosomal protein eS1 family. In terms of assembly, component of the small ribosomal subunit. Mature ribosomes consist of a small (40S) and a large (60S) subunit. The 40S subunit contains about 33 different proteins and 1 molecule of RNA (18S). The 60S subunit contains about 49 different proteins and 3 molecules of RNA (25S, 5.8S and 5S).

The protein localises to the cytoplasm. The polypeptide is Small ribosomal subunit protein eS1 (Uncinocarpus reesii (strain UAMH 1704)).